The chain runs to 72 residues: Protein kish-A (72 aa).

The N-terminal stretch at 1–26 (MSAIFNFQSLLTVILLLICTCAYIRS) is a signal peptide. Residues 27-53 (LTPSLLDKNKTGFLGIFWKCARIGERK) lie on the Extracellular side of the membrane. The N-linked (GlcNAc...) asparagine glycan is linked to Asn-35. The helical transmembrane segment at 54–71 (SPYVAFCCIVMALTILFS) threads the bilayer. A topological domain (cytoplasmic) is located at residue Glu-72.

Belongs to the KISH family.

It localises to the golgi apparatus membrane. Its function is as follows. Involved in the early part of the secretory pathway. This Danio rerio (Zebrafish) protein is Protein kish-A (tmem167a).